We begin with the raw amino-acid sequence, 749 residues long: 5-methyltetrahydropteroyltriglutamate--homocysteine methyltransferase (749 aa).

5-methyltetrahydropteroyltri-L-glutamate contacts are provided by residues 15–18 (RELK) and K114. L-homocysteine is bound by residues 425–427 (IGS) and E478. Residues 425-427 (IGS) and E478 each bind L-methionine. W555 lines the 5-methyltetrahydropteroyltri-L-glutamate pocket. D593 serves as a coordination point for L-homocysteine. D593 provides a ligand contact to L-methionine. Position 599 (E599) interacts with 5-methyltetrahydropteroyltri-L-glutamate. Zn(2+) is bound by residues H636, C638, and E660. The active-site Proton donor is the H689. Residue C721 coordinates Zn(2+).

The protein belongs to the vitamin-B12 independent methionine synthase family. The cofactor is Zn(2+).

It carries out the reaction 5-methyltetrahydropteroyltri-L-glutamate + L-homocysteine = tetrahydropteroyltri-L-glutamate + L-methionine. Its pathway is amino-acid biosynthesis; L-methionine biosynthesis via de novo pathway; L-methionine from L-homocysteine (MetE route): step 1/1. Its function is as follows. Catalyzes the transfer of a methyl group from 5-methyltetrahydrofolate to homocysteine resulting in methionine formation. In Streptococcus thermophilus (strain ATCC BAA-491 / LMD-9), this protein is 5-methyltetrahydropteroyltriglutamate--homocysteine methyltransferase.